A 335-amino-acid polypeptide reads, in one-letter code: Protein-arginine kinase (335 aa).

The 224-residue stretch at 21–244 (VIISSRIRLA…NQIINEEKQI (224 aa)) folds into the Phosphagen kinase C-terminal domain. ATP is bound by residues 24–28 (SSRIR), His-82, Arg-115, 166–170 (RASVM), and 197–202 (RGIYGE).

Belongs to the ATP:guanido phosphotransferase family.

The enzyme catalyses L-arginyl-[protein] + ATP = N(omega)-phospho-L-arginyl-[protein] + ADP + H(+). In terms of biological role, catalyzes the specific phosphorylation of arginine residues in proteins. The protein is Protein-arginine kinase of Staphylococcus epidermidis (strain ATCC 12228 / FDA PCI 1200).